The primary structure comprises 476 residues: uncharacterized protein (476 aa).

Positions 1–24 (MIRKSATGVIVALAVIWGGGTWYT) are cleaved as a signal peptide.

To E.coli YdgA and H.influenzae HI_1236.

This is an uncharacterized protein from Escherichia coli (strain K12).